A 97-amino-acid chain; its full sequence is Co-chaperonin GroES (97 aa).

Belongs to the GroES chaperonin family. Heptamer of 7 subunits arranged in a ring. Interacts with the chaperonin GroEL.

The protein resides in the cytoplasm. Its function is as follows. Together with the chaperonin GroEL, plays an essential role in assisting protein folding. The GroEL-GroES system forms a nano-cage that allows encapsulation of the non-native substrate proteins and provides a physical environment optimized to promote and accelerate protein folding. GroES binds to the apical surface of the GroEL ring, thereby capping the opening of the GroEL channel. The polypeptide is Co-chaperonin GroES (Erwinia tasmaniensis (strain DSM 17950 / CFBP 7177 / CIP 109463 / NCPPB 4357 / Et1/99)).